The primary structure comprises 441 residues: ATP-dependent protease ATPase subunit HslU (441 aa).

ATP is bound by residues isoleucine 18, 60–65, aspartate 254, glutamate 319, and arginine 391; that span reads GVGKTE.

This sequence belongs to the ClpX chaperone family. HslU subfamily. As to quaternary structure, a double ring-shaped homohexamer of HslV is capped on each side by a ring-shaped HslU homohexamer. The assembly of the HslU/HslV complex is dependent on binding of ATP.

It is found in the cytoplasm. ATPase subunit of a proteasome-like degradation complex; this subunit has chaperone activity. The binding of ATP and its subsequent hydrolysis by HslU are essential for unfolding of protein substrates subsequently hydrolyzed by HslV. HslU recognizes the N-terminal part of its protein substrates and unfolds these before they are guided to HslV for hydrolysis. In Shewanella denitrificans (strain OS217 / ATCC BAA-1090 / DSM 15013), this protein is ATP-dependent protease ATPase subunit HslU.